The chain runs to 347 residues: tRNA N6-adenosine threonylcarbamoyltransferase (347 aa).

2 residues coordinate Fe cation: His111 and His115. Substrate is bound by residues 133–137, Asp166, Gly179, and Asn278; that span reads LASGG. Residue Asp306 participates in Fe cation binding.

The protein belongs to the KAE1 / TsaD family. It depends on Fe(2+) as a cofactor.

The protein resides in the cytoplasm. It carries out the reaction L-threonylcarbamoyladenylate + adenosine(37) in tRNA = N(6)-L-threonylcarbamoyladenosine(37) in tRNA + AMP + H(+). Required for the formation of a threonylcarbamoyl group on adenosine at position 37 (t(6)A37) in tRNAs that read codons beginning with adenine. Is involved in the transfer of the threonylcarbamoyl moiety of threonylcarbamoyl-AMP (TC-AMP) to the N6 group of A37, together with TsaE and TsaB. TsaD likely plays a direct catalytic role in this reaction. This Paramagnetospirillum magneticum (strain ATCC 700264 / AMB-1) (Magnetospirillum magneticum) protein is tRNA N6-adenosine threonylcarbamoyltransferase.